The following is a 137-amino-acid chain: 2-iminobutanoate/2-iminopropanoate deaminase (137 aa).

S2 carries the N-acetylserine modification. N6-succinyllysine is present on residues K13 and K67. T74 carries the post-translational modification Phosphothreonine. S136 bears the Phosphoserine mark.

As to quaternary structure, homotrimer. Interacts with YTHDF2. In terms of tissue distribution, expressed by various malignant neoplasms.

It localises to the cytoplasm. Its subcellular location is the nucleus. The protein resides in the peroxisome. It is found in the mitochondrion. The enzyme catalyses 2-iminobutanoate + H2O = 2-oxobutanoate + NH4(+). The catalysed reaction is 2-iminopropanoate + H2O = pyruvate + NH4(+). Its function is as follows. Catalyzes the hydrolytic deamination of enamine/imine intermediates that form during the course of normal metabolism. May facilitate the release of ammonia from these potentially toxic reactive metabolites, reducing their impact on cellular components. It may act on enamine/imine intermediates formed by several types of pyridoxal-5'-phosphate-dependent dehydratases including L-threonine dehydratase. In terms of biological role, also promotes endoribonucleolytic cleavage of some transcripts by promoting recruitment of the ribonuclease P/MRP complex. Acts by bridging YTHDF2 and the ribonuclease P/MRP complex. RIDA/HRSP12 binds to N6-methyladenosine (m6A)-containing mRNAs containing a 5'-GGUUC-3' motif: cooperative binding of RIDA/HRSP12 and YTHDF2 to such transcripts lead to recruitment of the ribonuclease P/MRP complex and subsequent endoribonucleolytic cleavage. This chain is 2-iminobutanoate/2-iminopropanoate deaminase, found in Capra hircus (Goat).